A 187-amino-acid chain; its full sequence is Peptidyl-tRNA hydrolase (187 aa).

Tyr-14 contacts tRNA. The active-site Proton acceptor is His-19. TRNA contacts are provided by Tyr-64, Asn-66, and Asn-112.

Belongs to the PTH family. Monomer.

It is found in the cytoplasm. It carries out the reaction an N-acyl-L-alpha-aminoacyl-tRNA + H2O = an N-acyl-L-amino acid + a tRNA + H(+). In terms of biological role, hydrolyzes ribosome-free peptidyl-tRNAs (with 1 or more amino acids incorporated), which drop off the ribosome during protein synthesis, or as a result of ribosome stalling. Its function is as follows. Catalyzes the release of premature peptidyl moieties from peptidyl-tRNA molecules trapped in stalled 50S ribosomal subunits, and thus maintains levels of free tRNAs and 50S ribosomes. The sequence is that of Peptidyl-tRNA hydrolase from Clostridium acetobutylicum (strain ATCC 824 / DSM 792 / JCM 1419 / IAM 19013 / LMG 5710 / NBRC 13948 / NRRL B-527 / VKM B-1787 / 2291 / W).